A 207-amino-acid chain; its full sequence is V-type ATP synthase subunit D (207 aa).

This sequence belongs to the V-ATPase D subunit family.

Its function is as follows. Produces ATP from ADP in the presence of a proton gradient across the membrane. The polypeptide is V-type ATP synthase subunit D (Streptococcus gordonii (strain Challis / ATCC 35105 / BCRC 15272 / CH1 / DL1 / V288)).